A 244-amino-acid chain; its full sequence is Chlorosome protein I (244 aa).

Residues 1–95 form the 2Fe-2S ferredoxin-type domain; it reads MNLIINDKTA…TVKVLSRPEE (95 aa). The [2Fe-2S] cluster site is built by C33, C39, C42, and C77.

Requires [2Fe-2S] cluster as cofactor.

It localises to the chlorosome. In terms of biological role, could play a direct role in the oxidation or reduction of the quenching species formed in the chlorosome. This Chlorobaculum tepidum (strain ATCC 49652 / DSM 12025 / NBRC 103806 / TLS) (Chlorobium tepidum) protein is Chlorosome protein I (csmI).